We begin with the raw amino-acid sequence, 180 residues long: ATP synthase subunit b (180 aa).

Residues serine 26–glycine 48 form a helical membrane-spanning segment.

This sequence belongs to the ATPase B chain family. As to quaternary structure, F-type ATPases have 2 components, F(1) - the catalytic core - and F(0) - the membrane proton channel. F(1) has five subunits: alpha(3), beta(3), gamma(1), delta(1), epsilon(1). F(0) has three main subunits: a(1), b(2) and c(10-14). The alpha and beta chains form an alternating ring which encloses part of the gamma chain. F(1) is attached to F(0) by a central stalk formed by the gamma and epsilon chains, while a peripheral stalk is formed by the delta and b chains.

It is found in the cell inner membrane. F(1)F(0) ATP synthase produces ATP from ADP in the presence of a proton or sodium gradient. F-type ATPases consist of two structural domains, F(1) containing the extramembraneous catalytic core and F(0) containing the membrane proton channel, linked together by a central stalk and a peripheral stalk. During catalysis, ATP synthesis in the catalytic domain of F(1) is coupled via a rotary mechanism of the central stalk subunits to proton translocation. In terms of biological role, component of the F(0) channel, it forms part of the peripheral stalk, linking F(1) to F(0). The sequence is that of ATP synthase subunit b from Sulfurihydrogenibium sp. (strain YO3AOP1).